A 529-amino-acid chain; its full sequence is MLQSTLDPNASAYDEAAATMSGKLDEINAELAKALAGGGPKYVDRHHARGNLTPRERIELLVDPDSPFLELSPLAAYGSNFQIGASLVTGIGAVCGVECMIVANDPTVKGGTSNPWTLRKILRANQIAFENRLPVISLVESGGADLPTQKEIFIPGGQMFRDLTRLSAAGIPTIALVFGNSTAGGAYVPGMSDHVVMIKERSKVFLAGPPLVKMATGEESDDESLGGAEMHARISGLADYFALDELDAIRIGRRIVARLNWIKQGPAPAPVTEPLFDAEELIGIVPPDLRIPFDPREVIARIVDGSEFDEFKPLYGSSLVTGWARLHGYPLGILANARGVLFSEESQKATQFIQLANRADTPLLFLHNTTGYMVGKDYEEGGMIKHGSMMINAVSNSTVPHISLLIGASYGAGHYGMCGRAYDPRFLFAWPSAKSAVMGGAQLSGVLSIVARAAAEARGQQVDEAADAAMRAAVEGQIEAESLPLVLSGMLYDDGVIDPRDTRTVLGMCLSAIANGPIKGTSNFGVFRM.

One can recognise a CoA carboxyltransferase N-terminal domain in the interval 20–271 (MSGKLDEINA…IKQGPAPAPV (252 aa)). Positions 270 to 520 (PVTEPLFDAE…SAIANGPIKG (251 aa)) constitute a CoA carboxyltransferase C-terminal domain.

The protein belongs to the AccD/PCCB family. In terms of assembly, the biotin-dependent acyl-CoA carboxylase complex is composed of an AccA protein, which contains the biotin carboxylase (BC) and biotin carboxyl carrier protein (BCCP) domains, and an AccD protein, which contains the carboxyl transferase (CT) domain.

Its function is as follows. Component of a biotin-dependent acyl-CoA carboxylase complex. This subunit transfers the CO2 from carboxybiotin to the CoA ester substrate. The protein is Probable biotin-dependent acyl-coenzyme A carboxylase beta2 subunit (accD2) of Mycobacterium tuberculosis (strain ATCC 25618 / H37Rv).